A 176-amino-acid chain; its full sequence is Photosystem I assembly protein Ycf4 (176 aa).

2 consecutive transmembrane segments (helical) span residues Phe-22–Ser-42 and Leu-48–Ile-68.

This sequence belongs to the Ycf4 family.

It is found in the plastid thylakoid membrane. Functionally, seems to be required for the assembly of the photosystem I complex. The protein is Photosystem I assembly protein Ycf4 of Cuscuta gronovii (Common dodder).